A 422-amino-acid polypeptide reads, in one-letter code: MIQNNPKSIGSSSNKSARSSGSRQNILKMIQFENQRLHEYYNDFSSLKETILTAPSIVEYLFQKPSMKYDTIEKIYKLFTDPKSNYLENYTNITRVTKYISDYLFADMIELIELQDKYHVCNDNYNYYVDMILKNRNKYPKYTYLSQRYTPLIQTIGDTLDNIQLVEKYVDDDGAKISIKYEISWIYNWTFKNDCKYNLDIPFVFDFFVVLVYRERLILFVIEVDRDINNPLYHTESIIKQIILFQMNVFVLRISQQHLKDNLKKRIIRFIKNAVSSKVYLSEKYITPNINLIDMDLVKLELEKFYQSYKCCNSYYHKSLLDNSTIYPDPIKNKFHNGRNMGITLKTDKIYNKDDDEYFDTLIGTKFTREPDIPIVVTDDVFDWIINKCPKEPSKKQYSERKISEKQQKYNDICISLVGKII.

The interval 1-22 is disordered; sequence MIQNNPKSIGSSSNKSARSSGS. Residues 7–22 are compositionally biased toward low complexity; the sequence is KSIGSSSNKSARSSGS.

This is an uncharacterized protein from Acanthamoeba polyphaga mimivirus (APMV).